A 152-amino-acid chain; its full sequence is Deoxyuridine 5'-triphosphate nucleotidohydrolase (152 aa).

Residues 71–73 (RSG), asparagine 84, 88–90 (LID), and methionine 98 each bind substrate.

The protein belongs to the dUTPase family. The cofactor is Mg(2+).

The enzyme catalyses dUTP + H2O = dUMP + diphosphate + H(+). It participates in pyrimidine metabolism; dUMP biosynthesis; dUMP from dCTP (dUTP route): step 2/2. In terms of biological role, this enzyme is involved in nucleotide metabolism: it produces dUMP, the immediate precursor of thymidine nucleotides and it decreases the intracellular concentration of dUTP so that uracil cannot be incorporated into DNA. This Citrobacter koseri (strain ATCC BAA-895 / CDC 4225-83 / SGSC4696) protein is Deoxyuridine 5'-triphosphate nucleotidohydrolase.